The sequence spans 77 residues: U14-theraphotoxin-Cg1b (77 aa).

The N-terminal stretch at 1–21 (MKTSVLLVILGIAAITVQCTA) is a signal peptide. The propeptide occupies 22 to 49 (SESVEQDSLRTFVDAVLGWNAEMASEAR). Intrachain disulfides connect C50-C64, C57-C69, and C63-C75.

It belongs to the neurotoxin 10 (Hwtx-1) family. 65 (Jztx-21) subfamily. As to expression, expressed by the venom gland.

It localises to the secreted. Probable ion channel inhibitor. The protein is U14-theraphotoxin-Cg1b of Chilobrachys guangxiensis (Chinese earth tiger tarantula).